An 86-amino-acid chain; its full sequence is Cell division topological specificity factor (86 aa).

Belongs to the MinE family.

Its function is as follows. Prevents the cell division inhibition by proteins MinC and MinD at internal division sites while permitting inhibition at polar sites. This ensures cell division at the proper site by restricting the formation of a division septum at the midpoint of the long axis of the cell. The chain is Cell division topological specificity factor from Shewanella halifaxensis (strain HAW-EB4).